Consider the following 177-residue polypeptide: ATP synthase subunit delta (177 aa).

This sequence belongs to the ATPase delta chain family. F-type ATPases have 2 components, F(1) - the catalytic core - and F(0) - the membrane proton channel. F(1) has five subunits: alpha(3), beta(3), gamma(1), delta(1), epsilon(1). F(0) has three main subunits: a(1), b(2) and c(10-14). The alpha and beta chains form an alternating ring which encloses part of the gamma chain. F(1) is attached to F(0) by a central stalk formed by the gamma and epsilon chains, while a peripheral stalk is formed by the delta and b chains.

The protein localises to the cell membrane. Functionally, f(1)F(0) ATP synthase produces ATP from ADP in the presence of a proton or sodium gradient. F-type ATPases consist of two structural domains, F(1) containing the extramembraneous catalytic core and F(0) containing the membrane proton channel, linked together by a central stalk and a peripheral stalk. During catalysis, ATP synthesis in the catalytic domain of F(1) is coupled via a rotary mechanism of the central stalk subunits to proton translocation. In terms of biological role, this protein is part of the stalk that links CF(0) to CF(1). It either transmits conformational changes from CF(0) to CF(1) or is implicated in proton conduction. This chain is ATP synthase subunit delta, found in Carboxydothermus hydrogenoformans (strain ATCC BAA-161 / DSM 6008 / Z-2901).